The following is a 79-amino-acid chain: Beta-hexatoxin-Mg1a (79 aa).

Positions 1-20 (MKAPATTLILVMSLISVLWA) are cleaved as a signal peptide. Residues 21 to 50 (TPDLEEGDLLAELGDLIATDDEYPMKPEER) constitute a propeptide that is removed on maturation. 3 disulfides stabilise this stretch: Cys52–Cys66, Cys59–Cys71, and Cys65–Cys76.

It belongs to the neurotoxin 15 family. 01 (magi-5) subfamily. Expressed by the venom gland.

The protein resides in the secreted. Functionally, insect and vertebrate active toxin. Binds to site 4 of mammalian voltage-gated sodium channels and shifts the activation voltage of the mammalian Nav1.2a/SCN2A channel to more hyperpolarized voltages, whereas the insect channel, DmNav1 (para), is not affected. Competes for binding at site 3 of the insect sodium channel. Causes temporary paralysis when injected into lepidopteran larvae at 8.6 nmol/g. A low intracranial injection dose into mice causes lacrimation, closure of the eyes and sweating. A high injection dose causes extensive lacrimation and death. The protein is Beta-hexatoxin-Mg1a of Macrothele gigas (Japanese funnel web spider).